We begin with the raw amino-acid sequence, 313 residues long: Ribonuclease HIII (313 aa).

In terms of domain architecture, RNase H type-2 spans 98-313; sequence YNCIGSDEAG…REKALKLIKK (216 aa). Positions 104, 105, and 208 each coordinate a divalent metal cation.

The protein belongs to the RNase HII family. RnhC subfamily. Requires Mn(2+) as cofactor. The cofactor is Mg(2+).

The protein resides in the cytoplasm. It carries out the reaction Endonucleolytic cleavage to 5'-phosphomonoester.. In terms of biological role, endonuclease that specifically degrades the RNA of RNA-DNA hybrids. This Macrococcus caseolyticus (strain JCSC5402) (Macrococcoides caseolyticum) protein is Ribonuclease HIII.